Consider the following 567-residue polypeptide: Platelet glycoprotein V (567 aa).

An N-terminal signal peptide occupies residues 1-16; it reads MLRSALLSAVLPLLRA. One can recognise an LRRNT domain in the interval 17–50; sequence QPFPCPKTCKCVVRDAAQCSGGSVAHIAELGLPT. At 17–522 the chain is on the extracellular side; sequence QPFPCPKTCK…ESPNNRLYWG (506 aa). N-linked (GlcNAc...) asparagine glycans are attached at residues asparagine 51 and asparagine 67. 14 LRR repeats span residues 75-96, 99-120, 123-144, 147-168, 171-193, 195-216, 219-240, 243-264, 267-288, 291-312, 315-337, 340-361, 364-385, and 388-409; these read VLQR…TFND, KLKT…ILDK, LLEQ…LFQQ, NLQE…LFSS, ELKL…LGAQ, KLEK…LLSN, ALTE…AFDR, NLSS…LFLH, SVSR…LFGE, GLRE…AFRN, GLQT…VFQG, ELRV…ALRG, HLRQ…LFRN, and SLES…VFAA. Residue asparagine 181 is glycosylated (N-linked (GlcNAc...) asparagine). A glycan (N-linked (GlcNAc...) asparagine) is linked at asparagine 243. N-linked (GlcNAc...) asparagine glycans are attached at residues asparagine 298 and asparagine 312. Asparagine 385 is a glycosylation site (N-linked (GlcNAc...) asparagine). The 54-residue stretch at 421 to 474 folds into the LRRCT domain; sequence NPWLCDCGLWRFLQWLRHHPDILGRDEPPQCRGPEPRASLSFWELLQGDPWCPD. Residues 523-543 traverse the membrane as a helical segment; the sequence is LYILLLVAQAIIAAFIVFAMI. Residues 544-567 are Cytoplasmic-facing; it reads KIGQLFRTLIREKLLLEAMGKSCN.

It is found in the membrane. The GPIb-V-IX complex functions as the vWF receptor and mediates vWF-dependent platelet adhesion to blood vessels. The adhesion of platelets to injured vascular surfaces in the arterial circulation is a critical initiating event in hemostasis. The polypeptide is Platelet glycoprotein V (Gp5) (Mus musculus (Mouse)).